The sequence spans 1065 residues: RNA2 polyprotein (1065 aa).

In terms of assembly, interacts with the large capsid protein. Interacts with the movement protein (via C-terminus). As to quaternary structure, interacts with the small capsid protein. Homomultimer; assembles as pentons. Interacts (via C-terminus) with the small capsid protein. In terms of processing, specific enzymatic cleavages by picornain 3C-like protease in vivo yield mature proteins.

Its subcellular location is the host endoplasmic reticulum. It is found in the host cell junction. The protein localises to the host plasmodesma. The protein resides in the virion. Its function is as follows. Acts as a suppressor of post-transcriptional gene silencing (PTGS), a mechanism of plant viral defense that limits the accumulation of viral RNAs. Binds ssRNA. Transports the viral genome to neighboring plant cells directly through plasmosdesmata, without any budding. The movement protein allows efficient cell to cell propagation, by bypassing the host cell wall barrier. Acts by forming a tubular structure at the host plasmodesmata, enlarging it enough to allow free passage of virion capsids. Binds to GTP and to single-stranded RNA and single-stranded DNA in a non-sequence-specific manner. Also acts as a suppressor of post-transcriptional gene silencing (PTGS), a mechanism of plant viral defense that limits the accumulation of viral RNAs. Functionally, together with the small capsid protein, forms an icosahedral capsid (T=3) enclosing the viral positive strand RNA genome, with a diameter of approximately 300 Angstroms. The large capsid protein interacts with the viral RNA. Also acts as a suppressor of post-transcriptional gene silencing (PTGS), a mechanism of plant viral defense that limits the accumulation of viral RNAs. Binds ssRNA. In terms of biological role, together with the large capsid protein, forms an icosahedral capsid (T=3) enclosing the viral positive strand RNA genome, with a diameter of approximately 300 Angstroms. The capsid is formed from 60 copies each of the large and the small capsid protein. The small capsid protein forms the turrets at the fivefold axes of the viral particle. In Broad bean wilt virus 2 (BBWV-2), this protein is RNA2 polyprotein.